A 90-amino-acid polypeptide reads, in one-letter code: Acyl-CoA-binding protein (90 aa).

The segment covering 1–16 (MGLKEDFEEHAEKAKT) has biased composition (basic and acidic residues). Residues 1 to 20 (MGLKEDFEEHAEKAKTLPEN) are disordered. Residues 3 to 88 (LKEDFEEHAE…VKQLLGEAAA (86 aa)) enclose the ACB domain. An acyl-CoA is bound by residues 30–34 (YGLYK), K56, and Y75.

It belongs to the ACBP family.

Its function is as follows. Binds medium- and long-chain acyl-CoA esters with very high affinity and may function as an intracellular carrier of acyl-CoA esters. In Ricinus communis (Castor bean), this protein is Acyl-CoA-binding protein.